The following is a 228-amino-acid chain: Isoprenyl transferase (228 aa).

The active site involves D9. D9 provides a ligand contact to Mg(2+). Residues 10–13 (GNGR), W14, R22, H26, and 54–56 (STE) each bind substrate. N57 serves as the catalytic Proton acceptor. Substrate is bound by residues W58, R60, R175, and 181 to 183 (RMS). Position 194 (E194) interacts with Mg(2+).

It belongs to the UPP synthase family. As to quaternary structure, homodimer. Requires Mg(2+) as cofactor.

Its function is as follows. Catalyzes the condensation of isopentenyl diphosphate (IPP) with allylic pyrophosphates generating different type of terpenoids. In Treponema pallidum (strain Nichols), this protein is Isoprenyl transferase.